The primary structure comprises 711 residues: BCLAF1 and THRAP3 family member 3 (711 aa).

Over residues 1 to 15 the composition is skewed to basic residues; that stretch reads MARSRSRSPRWKHRS. Disordered regions lie at residues 1 to 42 and 48 to 67; these read MARS…YRKD and AWRMDSEKHGQSKPRIPSRG. 2 positions are modified to phosphoserine: S15 and S17. Basic and acidic residues predominate over residues 48-57; the sequence is AWRMDSEKHG. A phosphoserine mark is found at S78, S80, and S187. Disordered stretches follow at residues 94–350 and 371–404; these read KPHR…KDSI and EKIKKEGDCRKESNSSSNQLDKSQKLPDVKPSPI. Basic and acidic residues-rich tracts occupy residues 163–197, 204–213, 220–242, 296–311, 318–349, and 371–383; these read FRFEGKWHEDELRHQRIQEEKYSQSTRRGSEDFET, RYPEDRDFRK, RPKDVERYESREPARNPKWKPEH, SDGRTQKYCKEEDRKY, LNRELDCFNTGRGRETQDGQVKEPFKPSKKDS, and EKIKKEGDCRKES. K400 is covalently cross-linked (Glycyl lysine isopeptide (Lys-Gly) (interchain with G-Cter in SUMO2)). A phosphoserine mark is found at S402 and S578.

It belongs to the BCLAF1/THRAP3 family.

The protein localises to the mitochondrion. The sequence is that of BCLAF1 and THRAP3 family member 3 from Homo sapiens (Human).